Here is a 67-residue protein sequence, read N- to C-terminus: DNA-directed RNA polymerase subunit omega (67 aa).

The protein belongs to the RNA polymerase subunit omega family. As to quaternary structure, the RNAP catalytic core consists of 2 alpha, 1 beta, 1 beta' and 1 omega subunit. When a sigma factor is associated with the core the holoenzyme is formed, which can initiate transcription.

It carries out the reaction RNA(n) + a ribonucleoside 5'-triphosphate = RNA(n+1) + diphosphate. In terms of biological role, promotes RNA polymerase assembly. Latches the N- and C-terminal regions of the beta' subunit thereby facilitating its interaction with the beta and alpha subunits. This Methylibium petroleiphilum (strain ATCC BAA-1232 / LMG 22953 / PM1) protein is DNA-directed RNA polymerase subunit omega.